The chain runs to 318 residues: uncharacterized protein (318 aa).

Helical transmembrane passes span 230-250 (VWTY…SFLI) and 264-284 (ASLM…LGVI).

The protein belongs to the glycosyltransferase 2 family. GtrB subfamily.

The protein resides in the cell membrane. This is an uncharacterized protein from Synechocystis sp. (strain ATCC 27184 / PCC 6803 / Kazusa).